The sequence spans 399 residues: Multi-drug resistance efflux pump PmrA (399 aa).

The next 10 helical transmembrane spans lie at Ile12–Phe34, Ala49–Ala71, Gly84–Leu106, Leu140–Phe162, Val167–Ile186, Leu217–Val239, Leu248–Met270, Leu306–Leu328, Val340–Val362, and Phe366–Ile388.

This sequence belongs to the major facilitator superfamily. TCR/Tet family.

Its subcellular location is the cell membrane. Functionally, efflux pump for various substrates. The chain is Multi-drug resistance efflux pump PmrA (pmrA) from Streptococcus pneumoniae serotype 4 (strain ATCC BAA-334 / TIGR4).